A 298-amino-acid chain; its full sequence is Probable endonuclease 4 (298 aa).

The Zn(2+) site is built by H69, H111, E146, D180, H183, H215, D228, H230, and E260.

It belongs to the AP endonuclease 2 family. It depends on Zn(2+) as a cofactor.

The catalysed reaction is Endonucleolytic cleavage to 5'-phosphooligonucleotide end-products.. In terms of biological role, endonuclease IV plays a role in DNA repair. It cleaves phosphodiester bonds at apurinic or apyrimidinic (AP) sites, generating a 3'-hydroxyl group and a 5'-terminal sugar phosphate. This Bacillus cytotoxicus (strain DSM 22905 / CIP 110041 / 391-98 / NVH 391-98) protein is Probable endonuclease 4.